The following is a 381-amino-acid chain: Putative MgpC-like protein MPN_503 (381 aa).

Residues 1-109 (MNGVAQDKVH…TDSQQSGHNS (109 aa)) form a disordered region. Residues 13 to 31 (EQTTQWNQQASQKNLTNNP) show a composition bias toward polar residues. 2 stretches are compositionally biased toward basic and acidic residues: residues 40 to 51 (KLDKGRAYRKLN) and 61 to 73 (DSTK…DKDG). Residues 89-109 (VSSTESQMAAVTDSQQSGHNS) show a composition bias toward polar residues.

It belongs to the MgpC family.

In Mycoplasma pneumoniae (strain ATCC 29342 / M129 / Subtype 1) (Mycoplasmoides pneumoniae), this protein is Putative MgpC-like protein MPN_503.